The primary structure comprises 163 residues: MSARPDQSRTAAPSATTSPVEIYCDGACSGNPGPGGYGAILRYNGHEKEIRGSEAHTTNNRMELTAAMEALRLLTRPCRITIVTDSQYLVKGMTEWIQGWQRRGWQNSKKEPVLNRDLWEELLKLSAHHDVSWQWIRGHAGHAENERCDSLARQAITEMRGAP.

The RNase H type-1 domain occupies 16–157 (TTSPVEIYCD…CDSLARQAIT (142 aa)). 4 residues coordinate Mg(2+): D25, E63, D85, and D149.

This sequence belongs to the RNase H family. Monomer. The cofactor is Mg(2+).

The protein localises to the cytoplasm. The catalysed reaction is Endonucleolytic cleavage to 5'-phosphomonoester.. Endonuclease that specifically degrades the RNA of RNA-DNA hybrids. The sequence is that of Ribonuclease H from Pelobacter propionicus (strain DSM 2379 / NBRC 103807 / OttBd1).